The chain runs to 176 residues: Ribosome maturation factor RimM (176 aa).

Positions 97–176 constitute a PRC barrel domain; the sequence is EDEFYWRDLI…QILVDWDPDF (80 aa).

This sequence belongs to the RimM family. In terms of assembly, binds ribosomal protein uS19.

The protein localises to the cytoplasm. In terms of biological role, an accessory protein needed during the final step in the assembly of 30S ribosomal subunit, possibly for assembly of the head region. Essential for efficient processing of 16S rRNA. May be needed both before and after RbfA during the maturation of 16S rRNA. It has affinity for free ribosomal 30S subunits but not for 70S ribosomes. The chain is Ribosome maturation factor RimM from Shewanella sp. (strain MR-4).